Consider the following 311-residue polypeptide: 4-hydroxy-3-methylbut-2-enyl diphosphate reductase (311 aa).

A [4Fe-4S] cluster-binding site is contributed by C12. The (2E)-4-hydroxy-3-methylbut-2-enyl diphosphate site is built by H41 and H74. 2 residues coordinate dimethylallyl diphosphate: H41 and H74. 2 residues coordinate isopentenyl diphosphate: H41 and H74. A [4Fe-4S] cluster-binding site is contributed by C96. H124 serves as a coordination point for (2E)-4-hydroxy-3-methylbut-2-enyl diphosphate. Residue H124 coordinates dimethylallyl diphosphate. Position 124 (H124) interacts with isopentenyl diphosphate. E126 functions as the Proton donor in the catalytic mechanism. A (2E)-4-hydroxy-3-methylbut-2-enyl diphosphate-binding site is contributed by T168. C198 contributes to the [4Fe-4S] cluster binding site. S226, S227, N228, and S270 together coordinate (2E)-4-hydroxy-3-methylbut-2-enyl diphosphate. Dimethylallyl diphosphate-binding residues include S226, S227, N228, and S270. S226, S227, N228, and S270 together coordinate isopentenyl diphosphate.

It belongs to the IspH family. It depends on [4Fe-4S] cluster as a cofactor.

It catalyses the reaction isopentenyl diphosphate + 2 oxidized [2Fe-2S]-[ferredoxin] + H2O = (2E)-4-hydroxy-3-methylbut-2-enyl diphosphate + 2 reduced [2Fe-2S]-[ferredoxin] + 2 H(+). It carries out the reaction dimethylallyl diphosphate + 2 oxidized [2Fe-2S]-[ferredoxin] + H2O = (2E)-4-hydroxy-3-methylbut-2-enyl diphosphate + 2 reduced [2Fe-2S]-[ferredoxin] + 2 H(+). It participates in isoprenoid biosynthesis; dimethylallyl diphosphate biosynthesis; dimethylallyl diphosphate from (2E)-4-hydroxy-3-methylbutenyl diphosphate: step 1/1. The protein operates within isoprenoid biosynthesis; isopentenyl diphosphate biosynthesis via DXP pathway; isopentenyl diphosphate from 1-deoxy-D-xylulose 5-phosphate: step 6/6. Its function is as follows. Catalyzes the conversion of 1-hydroxy-2-methyl-2-(E)-butenyl 4-diphosphate (HMBPP) into a mixture of isopentenyl diphosphate (IPP) and dimethylallyl diphosphate (DMAPP). Acts in the terminal step of the DOXP/MEP pathway for isoprenoid precursor biosynthesis. In Alcanivorax borkumensis (strain ATCC 700651 / DSM 11573 / NCIMB 13689 / SK2), this protein is 4-hydroxy-3-methylbut-2-enyl diphosphate reductase.